Reading from the N-terminus, the 98-residue chain is Putative pterin-4-alpha-carbinolamine dehydratase (98 aa).

The protein belongs to the pterin-4-alpha-carbinolamine dehydratase family.

It carries out the reaction (4aS,6R)-4a-hydroxy-L-erythro-5,6,7,8-tetrahydrobiopterin = (6R)-L-erythro-6,7-dihydrobiopterin + H2O. This is Putative pterin-4-alpha-carbinolamine dehydratase from Chelativorans sp. (strain BNC1).